The primary structure comprises 272 residues: Orotidine 5'-phosphate decarboxylase (272 aa).

The active-site Proton donor is Lys-93.

This sequence belongs to the OMP decarboxylase family. Type 2 subfamily.

The catalysed reaction is orotidine 5'-phosphate + H(+) = UMP + CO2. Its pathway is pyrimidine metabolism; UMP biosynthesis via de novo pathway; UMP from orotate: step 2/2. This Roseiflexus castenholzii (strain DSM 13941 / HLO8) protein is Orotidine 5'-phosphate decarboxylase.